A 252-amino-acid chain; its full sequence is Putative endonuclease C1F12.06c (252 aa).

Residues Asp43 and Asp114 each coordinate Mg(2+).

The protein belongs to the endonuclease V family.

The protein resides in the cytoplasm. It localises to the nucleus. The polypeptide is Putative endonuclease C1F12.06c (Schizosaccharomyces pombe (strain 972 / ATCC 24843) (Fission yeast)).